The sequence spans 576 residues: Arginine--tRNA ligase (576 aa).

The 'HIGH' region signature appears at 126-136 (ANPTGPMHIGH).

It belongs to the class-I aminoacyl-tRNA synthetase family. Monomer.

It localises to the cytoplasm. It catalyses the reaction tRNA(Arg) + L-arginine + ATP = L-arginyl-tRNA(Arg) + AMP + diphosphate. This chain is Arginine--tRNA ligase, found in Rickettsia typhi (strain ATCC VR-144 / Wilmington).